The primary structure comprises 441 residues: ACT domain-containing protein ACR8 (441 aa).

ACT domains follow at residues I34 to V110, A115 to K196, V248 to G324, and R326 to H405.

Expressed in roots, leaves, flowers and siliques.

Functionally, may bind amino acids. The chain is ACT domain-containing protein ACR8 from Arabidopsis thaliana (Mouse-ear cress).